The following is a 585-amino-acid chain: Acetolactate synthase large subunit (585 aa).

Thiamine diphosphate is bound at residue E60. FAD is bound by residues R162, H272–R293, and D315–D334. A thiamine pyrophosphate binding region spans residues Q407–W486. Mg(2+) is bound by residues D457 and N484.

This sequence belongs to the TPP enzyme family. In terms of assembly, dimer of large and small chains. Requires Mg(2+) as cofactor. Thiamine diphosphate serves as cofactor.

The protein localises to the plastid. Its subcellular location is the chloroplast. The catalysed reaction is 2 pyruvate + H(+) = (2S)-2-acetolactate + CO2. It participates in amino-acid biosynthesis; L-isoleucine biosynthesis; L-isoleucine from 2-oxobutanoate: step 1/4. The protein operates within amino-acid biosynthesis; L-valine biosynthesis; L-valine from pyruvate: step 1/4. This chain is Acetolactate synthase large subunit (ilvB), found in Cyanidium caldarium (Red alga).